Reading from the N-terminus, the 161-residue chain is Peptidyl-prolyl cis-trans isomerase-like 1 (161 aa).

Residues 1–155 (MATDVVFDTS…DEVKIIRAKV (155 aa)) form the PPIase cyclophilin-type domain.

The protein belongs to the cyclophilin-type PPIase family. PPIL1 subfamily.

The enzyme catalyses [protein]-peptidylproline (omega=180) = [protein]-peptidylproline (omega=0). Functionally, PPIases accelerate the folding of proteins. It catalyzes the cis-trans isomerization of proline imidic peptide bonds in oligopeptides. The sequence is that of Peptidyl-prolyl cis-trans isomerase-like 1 (cyp1) from Aspergillus fumigatus (strain ATCC MYA-4609 / CBS 101355 / FGSC A1100 / Af293) (Neosartorya fumigata).